We begin with the raw amino-acid sequence, 1128 residues long: Nck-associated protein 1 (1128 aa).

Residues 640–665 (AVNKKSKKQTGKKGEPEREKPGVESM) form a disordered region. A compositionally biased stretch (basic and acidic residues) spans 651-665 (KKGEPEREKPGVESM). Residues 995–1015 (IACLLMVFVAVSMPTLASNVM) form a helical membrane-spanning segment.

This sequence belongs to the HEM-1/HEM-2 family.

It is found in the cell membrane. It localises to the cell projection. Its subcellular location is the lamellipodium membrane. Functionally, part of the WAVE complex that regulates lamellipodia formation. The WAVE complex regulates actin filament reorganization via its interaction with the Arp2/3 complex. Actin remodeling activity is regulated by RAC1. Plays a role in neural tube closure. The polypeptide is Nck-associated protein 1 (nckap1) (Danio rerio (Zebrafish)).